The following is a 467-amino-acid chain: 3-isopropylmalate dehydratase large subunit (467 aa).

3 residues coordinate [4Fe-4S] cluster: Cys347, Cys407, and Cys410.

This sequence belongs to the aconitase/IPM isomerase family. LeuC type 1 subfamily. In terms of assembly, heterodimer of LeuC and LeuD. The cofactor is [4Fe-4S] cluster.

It catalyses the reaction (2R,3S)-3-isopropylmalate = (2S)-2-isopropylmalate. It participates in amino-acid biosynthesis; L-leucine biosynthesis; L-leucine from 3-methyl-2-oxobutanoate: step 2/4. Functionally, catalyzes the isomerization between 2-isopropylmalate and 3-isopropylmalate, via the formation of 2-isopropylmaleate. In Gloeothece citriformis (strain PCC 7424) (Cyanothece sp. (strain PCC 7424)), this protein is 3-isopropylmalate dehydratase large subunit.